Consider the following 73-residue polypeptide: UPF0435 protein lin1819 (73 aa).

This sequence belongs to the UPF0435 family.

The protein is UPF0435 protein lin1819 of Listeria innocua serovar 6a (strain ATCC BAA-680 / CLIP 11262).